The primary structure comprises 484 residues: Glycogen synthase (484 aa).

ADP-alpha-D-glucose is bound at residue Lys-15.

It belongs to the glycosyltransferase 1 family. Bacterial/plant glycogen synthase subfamily.

The catalysed reaction is [(1-&gt;4)-alpha-D-glucosyl](n) + ADP-alpha-D-glucose = [(1-&gt;4)-alpha-D-glucosyl](n+1) + ADP + H(+). Its pathway is glycan biosynthesis; glycogen biosynthesis. Its function is as follows. Synthesizes alpha-1,4-glucan chains using ADP-glucose. The chain is Glycogen synthase from Geotalea daltonii (strain DSM 22248 / JCM 15807 / FRC-32) (Geobacter daltonii).